A 283-amino-acid chain; its full sequence is MLIIETLPLLRQQIRRLRMEGKRVALVPTMGNLHDGHMKLVDEAKARADVVVVSIFVNPMQFDRPEDLARYPRTLQEDCEKLNKRKVDLVFAPSVKEIYPNGTETHTYVDVPGLSTMLEGASRPGHFRGVSTIVSKLFNLVQPDIACFGEKDFQQLALIRKMVADMGFDIEIVGVPIMRAKDGLALSSRNGYLTAEQRKIAPGLYKVLSSIADKLQAGERDLDEIITIAGQELNEKGFRADDIQIRDADTLLEVSETSKRAVILVAAWLGDARLIDNKMVELA.

30–37 (MGNLHDGH) is a binding site for ATP. The active-site Proton donor is histidine 37. Glutamine 61 contributes to the (R)-pantoate binding site. Residue glutamine 61 participates in beta-alanine binding. An ATP-binding site is contributed by 149–152 (GEKD). Glutamine 155 serves as a coordination point for (R)-pantoate. Residues methionine 178 and 186–189 (LSSR) contribute to the ATP site.

The protein belongs to the pantothenate synthetase family. In terms of assembly, homodimer.

Its subcellular location is the cytoplasm. The enzyme catalyses (R)-pantoate + beta-alanine + ATP = (R)-pantothenate + AMP + diphosphate + H(+). The protein operates within cofactor biosynthesis; (R)-pantothenate biosynthesis; (R)-pantothenate from (R)-pantoate and beta-alanine: step 1/1. With respect to regulation, activation requires a combination of a divalent cation, magnesium or manganese, and a monovalent cation, potassium or ammonium. Above the optimum concentration for activation, magnesium and manganese are rather inhibitory. Also activated by 2-mercaptoethanol, dithiothreitol, cysteine and glutathione. Inhibited by divalent cations (mercury, cobalt, zinc, copper, silver), chelating agents (EDTA, EGTA and o-phenanthroline), and analogs of beta-alanine (taurine, gamma-aminobutyrate, gamma-amino-beta-hydroxybutyrate). Catalyzes the condensation of pantoate with beta-alanine in an ATP-dependent reaction via a pantoyl-adenylate intermediate. This is Pantothenate synthetase (panC) from Escherichia coli (strain K12).